The following is a 1571-amino-acid chain: Phospholipid-transporting ATPase DNF1 (1571 aa).

Residues 1 to 94 form a disordered region; it reads MSGTFHGDGH…TPKLNNGSGT (94 aa). Residues 1-214 are Cytoplasmic-facing; that stretch reads MSGTFHGDGH…TFLPKNILFQ (214 aa). Over residues 29–40 the composition is skewed to basic and acidic residues; that stretch reads EDTHIAPTHFDD. Residues 42–56 are compositionally biased toward polar residues; it reads ATSNKYSRPQVSFND. Position 53 is a phosphoserine (Ser53). Residues 66-76 are compositionally biased toward acidic residues; that stretch reads AEEFTFNDDTE. Position 70 is a phosphothreonine (Thr70). Over residues 80 to 93 the composition is skewed to polar residues; sequence HSFQPTPKLNNGSG. Ser81 carries the phosphoserine modification. Thr85 is subject to Phosphothreonine. At Ser92 the chain carries Phosphoserine. A Phosphothreonine modification is found at Thr94. The residue at position 104 (Ser104) is a Phosphoserine. Position 109 is a phosphothreonine (Thr109). The chain crosses the membrane as a helical span at residues 215-235; sequence FHNFANVYFLVLIILGAFQIF. The segment at 234–241 is involved in phosphatidylcholine substrate selection; that stretch reads IFGVTNPG. Topologically, residues 236 to 239 are extracellular; sequence GVTN. A helical transmembrane segment spans residues 240-260; the sequence is PGLSAVPLVVIVIITAIKDAI. Topologically, residues 261–553 are cytoplasmic; the sequence is EDSRRTVLDL…RISRELNFSV (293 aa). A phosphoserine mark is found at Ser351, Ser354, Ser358, and Ser365. Tyr368 carries the post-translational modification Phosphotyrosine. Residues 554 to 574 form a helical membrane-spanning segment; it reads VINFVLLFILCFVSGIANGVY. The Extracellular portion of the chain corresponds to 575–594; it reads YDKKGRSRFSYEFGTIAGSA. The interval 586–590 is involved in phosphatidylcholine substrate selection; sequence EFGTI. Residues 595–615 form a helical membrane-spanning segment; sequence ATNGFVSFWVAVILYQSLVPI. The Cytoplasmic portion of the chain corresponds to 616 to 1188; that stretch reads SLYISVEIIK…WSYKRLAEMI (573 aa). Asp667 serves as the catalytic 4-aspartylphosphate intermediate. Positions 667, 668, 669, 801, 842, 844, 847, and 871 each coordinate ATP. Position 667 (Asp667) interacts with Mg(2+). Thr669 serves as a coordination point for Mg(2+). A Glycyl lysine isopeptide (Lys-Gly) (interchain with G-Cter in ubiquitin) cross-link involves residue Lys895. Residues Arg909, Thr910, Thr989, Gly990, Asp991, Arg1104, and Lys1110 each coordinate ATP. Asp1130 is a binding site for Mg(2+). The ATP site is built by Asn1133 and Asp1134. Asp1134 lines the Mg(2+) pocket. The chain crosses the membrane as a helical span at residues 1189–1209; it reads PEFFYKNMIFALALFWYGIYN. Topologically, residues 1210–1219 are extracellular; sequence DFDGSYLYEY. Residues 1220-1240 traverse the membrane as a helical segment; it reads TYMMFYNLAFTSLPVIFLGIL. The Cytoplasmic portion of the chain corresponds to 1241–1270; the sequence is DQDVNDTISLVVPQLYRVGILRKEWNQRKF. The helical transmembrane segment at 1271–1291 threads the bilayer; it reads LWYMLDGLYQSIICFFFPYLV. Topologically, residues 1292–1307 are extracellular; sequence YHKNMIVTSNGLGLDH. The helical transmembrane segment at 1308–1328 threads the bilayer; it reads RYFVGVYVTTIAVISCNTYVL. Topologically, residues 1329-1334 are cytoplasmic; it reads LHQYRW. A helical transmembrane segment spans residues 1335 to 1355; the sequence is DWFSGLFIALSCLVVFAWTGI. Residues 1356–1375 are Extracellular-facing; it reads WSSAIASREFFKAAARIYGA. A helical membrane pass occupies residues 1376–1396; the sequence is PSFWAVFFVAVLFCLLPRFTY. Arg1393 provides a ligand contact to a 1,2-diacyl-sn-glycero-3-phospho-L-serine. Residues 1397 to 1571 lie on the Cytoplasmic side of the membrane; the sequence is DSFQKFFYPT…ASLIGTQQNN (175 aa). Ser1506 is modified (phosphoserine). Phosphothreonine is present on Thr1551. Ser1552 and Ser1563 each carry phosphoserine.

Belongs to the cation transport ATPase (P-type) (TC 3.A.3) family. Type IV subfamily. Component of a flippase complex consisting of DNF1 and LEM3. Interacts with LEM3; the interaction is direct and required for their mutual export from the endoplasmic reticulum. Mg(2+) is required as a cofactor. Post-translationally, phosphorylated by FPK1 and KIN82.

The protein resides in the cell membrane. It is found in the endosome membrane. The protein localises to the golgi apparatus. Its subcellular location is the trans-Golgi network membrane. It localises to the cell septum. The protein resides in the bud. It carries out the reaction ATP + H2O + phospholipidSide 1 = ADP + phosphate + phospholipidSide 2.. The enzyme catalyses a 1,2-diacyl-sn-glycero-3-phosphoethanolamine(out) + ATP + H2O = a 1,2-diacyl-sn-glycero-3-phosphoethanolamine(in) + ADP + phosphate + H(+). It catalyses the reaction a 1,2-diacyl-sn-glycero-3-phosphocholine(out) + ATP + H2O = a 1,2-diacyl-sn-glycero-3-phosphocholine(in) + ADP + phosphate + H(+). The catalysed reaction is a beta-D-glucosyl-(1&lt;-&gt;1')-N-acylsphing-4-enine(out) + ATP + H2O = a beta-D-glucosyl-(1&lt;-&gt;1')-N-acylsphing-4-enine(in) + ADP + phosphate + H(+). It carries out the reaction a 1,2-diacyl-sn-glycero-3-phospho-L-serine(out) + ATP + H2O = a 1,2-diacyl-sn-glycero-3-phospho-L-serine(in) + ADP + phosphate + H(+). In terms of biological role, catalytic component of a P4-ATPase flippase complex which catalyzes the hydrolysis of ATP coupled to the transport of glucosylceramide, phosphatidylcholine, phosphatidylethanolamine, and small amounts of phosphatidylserine from the lumenal to the cytosolic leaflet of the cell membrane and ensures the maintenance of asymmetric distribution of phospholipids. Does not appear to transport sphingomyelin, inositol phosphoceramide, or phosphatidic acid. Required for efficient endocytosis. The sequence is that of Phospholipid-transporting ATPase DNF1 from Saccharomyces cerevisiae (strain ATCC 204508 / S288c) (Baker's yeast).